A 95-amino-acid chain; its full sequence is Integration host factor subunit beta (95 aa).

A disordered region spans residues Arg-56–Tyr-76.

The protein belongs to the bacterial histone-like protein family. As to quaternary structure, heterodimer of an alpha and a beta chain.

This protein is one of the two subunits of integration host factor, a specific DNA-binding protein that functions in genetic recombination as well as in transcriptional and translational control. The polypeptide is Integration host factor subunit beta (Shewanella baltica (strain OS223)).